A 483-amino-acid polypeptide reads, in one-letter code: Trehalose-6-phosphate synthase (483 aa).

Arg22 is a binding site for D-glucose 6-phosphate. 42–43 (GG) provides a ligand contact to UDP-alpha-D-glucose. Positions 94 and 148 each coordinate D-glucose 6-phosphate. Positions 290 and 295 each coordinate UDP-alpha-D-glucose. Arg328 contacts D-glucose 6-phosphate. A UDP-alpha-D-glucose-binding site is contributed by 393-397 (LVAKE).

Belongs to the glycosyltransferase 20 family. In terms of assembly, homotetramer.

It catalyses the reaction ADP-alpha-D-glucose + D-glucose 6-phosphate = alpha,alpha-trehalose 6-phosphate + ADP + H(+). It carries out the reaction CDP-alpha-D-glucose + D-glucose 6-phosphate = alpha,alpha-trehalose 6-phosphate + CDP + H(+). The catalysed reaction is GDP-alpha-D-glucose + D-glucose 6-phosphate = alpha,alpha-trehalose 6-phosphate + GDP + H(+). The enzyme catalyses TDP-alpha-D-glucose + D-glucose 6-phosphate = 5-methyl-UDP + alpha,alpha-trehalose 6-phosphate + H(+). It catalyses the reaction D-glucose 6-phosphate + UDP-alpha-D-glucose = alpha,alpha-trehalose 6-phosphate + UDP + H(+). It functions in the pathway glycan biosynthesis; trehalose biosynthesis. In terms of biological role, probably involved in the osmoprotection via the biosynthesis of trehalose and in the production of glycogen and alpha-glucan via the TreS-Pep2 branch involved in the biosynthesis of maltose-1-phosphate (M1P). Catalyzes the transfer of glucose from UDP-glucose (UDP-Glc) to D-glucose 6-phosphate (Glc-6-P) to form trehalose-6-phosphate. Probably also able to use ADP-Glc, CDP-Glc, GDP-Glc and TDP-Glc as glucosyl donors. This is Trehalose-6-phosphate synthase from Mycobacterium sp. (strain JLS).